Here is a 261-residue protein sequence, read N- to C-terminus: Bcl-2-binding component 3, isoforms 3/4 (261 aa).

Residues 27 to 261 (QICGPRERHG…ASAGDFLCTM (235 aa)) are disordered. The span at 40-50 (PGGQLPGARRG) shows a compositional bias: low complexity. The segment covering 53–63 (PRRPAPLPARP) has biased composition (pro residues). Over residues 64 to 73 (PGALGSVLRP) the composition is skewed to low complexity. Basic residues-rich tracts occupy residues 74-87 (LRARPGCRPRRPHP) and 95-106 (RPHRPTRRHRRP). Residues 124–146 (PGRSSALALAGGAAPGVARAQRP) show a composition bias toward low complexity. Over residues 147–171 (GGSGGRSHPGGPGSPRGGGTVGPGD) the composition is skewed to gly residues. Positions 172-197 (RGPAAADGGRPQRTVRAAETRGAAAA) are enriched in low complexity.

As to quaternary structure, does not interact with BCL2.

In terms of biological role, does not affect cell growth. This is Bcl-2-binding component 3, isoforms 3/4 (BBC3) from Homo sapiens (Human).